Consider the following 411-residue polypeptide: Serine hydroxymethyltransferase (411 aa).

Position 120-122 (120-122) interacts with (6S)-5,6,7,8-tetrahydrofolate; that stretch reads GHL. At K225 the chain carries N6-(pyridoxal phosphate)lysine. 350 to 352 lines the (6S)-5,6,7,8-tetrahydrofolate pocket; the sequence is SPF.

This sequence belongs to the SHMT family. Homodimer. Pyridoxal 5'-phosphate serves as cofactor.

The protein resides in the cytoplasm. It carries out the reaction (6R)-5,10-methylene-5,6,7,8-tetrahydrofolate + glycine + H2O = (6S)-5,6,7,8-tetrahydrofolate + L-serine. The protein operates within one-carbon metabolism; tetrahydrofolate interconversion. Its pathway is amino-acid biosynthesis; glycine biosynthesis; glycine from L-serine: step 1/1. Catalyzes the reversible interconversion of serine and glycine with tetrahydrofolate (THF) serving as the one-carbon carrier. This reaction serves as the major source of one-carbon groups required for the biosynthesis of purines, thymidylate, methionine, and other important biomolecules. Also exhibits THF-independent aldolase activity toward beta-hydroxyamino acids, producing glycine and aldehydes, via a retro-aldol mechanism. The chain is Serine hydroxymethyltransferase from Lactobacillus acidophilus (strain ATCC 700396 / NCK56 / N2 / NCFM).